We begin with the raw amino-acid sequence, 587 residues long: uncharacterized protein (587 aa).

The first 21 residues, 1 to 21 (MANRLLIYGLILWVSIIGSFA), serve as a signal peptide directing secretion. Over 22–541 (LDRNKTAQNA…LEKEVSFQRR (520 aa)) the chain is Lumenal. An N-linked (GlcNAc...) asparagine glycan is attached at Asn25. Residues 44–108 (GSTTNVQKEH…RNPGDSSNSF (65 aa)) form a disordered region. Over residues 63–90 (RTHDFRQASKVDIRQADIRENGERKEQD) the composition is skewed to basic and acidic residues. Over residues 91-108 (ALTQPATPRNPGDSSNSF) the composition is skewed to polar residues. Residues 163–331 (NEWSEREENQ…SLIKVYGKSM (169 aa)) form the SUN domain. Asn378, Asn381, Asn408, Asn448, and Asn486 each carry an N-linked (GlcNAc...) asparagine glycan. The chain crosses the membrane as a helical span at residues 542 to 562 (IVYASFFAFVGLISYLLITRE). Over 563 to 587 (LYFEDFEESKNGAIEKADIVQQAIR) the chain is Cytoplasmic.

The protein belongs to the SLP1 family. In terms of assembly, interacts with EMP65.

Its subcellular location is the endoplasmic reticulum membrane. May be involved in membrane protein folding. Required for localization of MPS3 to the nuclear envelope. This is an uncharacterized protein from Saccharomyces cerevisiae (strain ATCC 204508 / S288c) (Baker's yeast).